The sequence spans 477 residues: Bifunctional protein HldE (477 aa).

The ribokinase stretch occupies residues methionine 1–threonine 318. Lysine 179 carries the N6-acetyllysine modification. Residue asparagine 195 to glutamate 198 coordinates ATP. Aspartate 264 is a catalytic residue. A cytidylyltransferase region spans residues methionine 344–glycine 477.

The protein in the N-terminal section; belongs to the carbohydrate kinase PfkB family. This sequence in the C-terminal section; belongs to the cytidylyltransferase family. As to quaternary structure, homodimer.

The enzyme catalyses D-glycero-beta-D-manno-heptose 7-phosphate + ATP = D-glycero-beta-D-manno-heptose 1,7-bisphosphate + ADP + H(+). The catalysed reaction is D-glycero-beta-D-manno-heptose 1-phosphate + ATP + H(+) = ADP-D-glycero-beta-D-manno-heptose + diphosphate. The protein operates within nucleotide-sugar biosynthesis; ADP-L-glycero-beta-D-manno-heptose biosynthesis; ADP-L-glycero-beta-D-manno-heptose from D-glycero-beta-D-manno-heptose 7-phosphate: step 1/4. It functions in the pathway nucleotide-sugar biosynthesis; ADP-L-glycero-beta-D-manno-heptose biosynthesis; ADP-L-glycero-beta-D-manno-heptose from D-glycero-beta-D-manno-heptose 7-phosphate: step 3/4. Functionally, catalyzes the phosphorylation of D-glycero-D-manno-heptose 7-phosphate at the C-1 position to selectively form D-glycero-beta-D-manno-heptose-1,7-bisphosphate. Its function is as follows. Catalyzes the ADP transfer from ATP to D-glycero-beta-D-manno-heptose 1-phosphate, yielding ADP-D-glycero-beta-D-manno-heptose. This is Bifunctional protein HldE from Shigella flexneri serotype 5b (strain 8401).